The following is a 102-amino-acid chain: Large ribosomal subunit protein bL21 (102 aa).

The protein belongs to the bacterial ribosomal protein bL21 family. As to quaternary structure, part of the 50S ribosomal subunit. Contacts protein L20.

Functionally, this protein binds to 23S rRNA in the presence of protein L20. In Macrococcus caseolyticus (strain JCSC5402) (Macrococcoides caseolyticum), this protein is Large ribosomal subunit protein bL21.